A 141-amino-acid polypeptide reads, in one-letter code: Large ribosomal subunit protein uL11 (141 aa).

This sequence belongs to the universal ribosomal protein uL11 family. As to quaternary structure, part of the ribosomal stalk of the 50S ribosomal subunit. Interacts with L10 and the large rRNA to form the base of the stalk. L10 forms an elongated spine to which L12 dimers bind in a sequential fashion forming a multimeric L10(L12)X complex. One or more lysine residues are methylated.

In terms of biological role, forms part of the ribosomal stalk which helps the ribosome interact with GTP-bound translation factors. This is Large ribosomal subunit protein uL11 from Limosilactobacillus fermentum (strain NBRC 3956 / LMG 18251) (Lactobacillus fermentum).